The primary structure comprises 393 residues: Acetyl-CoA acetyltransferase (393 aa).

C88 functions as the Acyl-thioester intermediate in the catalytic mechanism. Catalysis depends on proton acceptor residues H349 and C379.

The protein belongs to the thiolase-like superfamily. Thiolase family.

The protein localises to the cytoplasm. It catalyses the reaction 2 acetyl-CoA = acetoacetyl-CoA + CoA. The protein operates within metabolic intermediate biosynthesis; (R)-mevalonate biosynthesis; (R)-mevalonate from acetyl-CoA: step 1/3. The protein is Acetyl-CoA acetyltransferase (atoB) of Pseudomonas aeruginosa (strain ATCC 15692 / DSM 22644 / CIP 104116 / JCM 14847 / LMG 12228 / 1C / PRS 101 / PAO1).